A 342-amino-acid polypeptide reads, in one-letter code: S-adenosylmethionine:tRNA ribosyltransferase-isomerase (342 aa).

It belongs to the QueA family. In terms of assembly, monomer.

Its subcellular location is the cytoplasm. It carries out the reaction 7-aminomethyl-7-carbaguanosine(34) in tRNA + S-adenosyl-L-methionine = epoxyqueuosine(34) in tRNA + adenine + L-methionine + 2 H(+). The protein operates within tRNA modification; tRNA-queuosine biosynthesis. Transfers and isomerizes the ribose moiety from AdoMet to the 7-aminomethyl group of 7-deazaguanine (preQ1-tRNA) to give epoxyqueuosine (oQ-tRNA). The polypeptide is S-adenosylmethionine:tRNA ribosyltransferase-isomerase (Geobacillus sp. (strain WCH70)).